The following is a 1321-amino-acid chain: Bile salt export pump (1321 aa).

The Cytoplasmic segment spans residues 1-62 (MSDSVILRSV…FSSWTDIWLM (62 aa)). In terms of domain architecture, ABC transmembrane type-1 1 spans 62-385 (MCMGSLCACI…ASPCLEAFAA (324 aa)). Residues 63–83 (CMGSLCACIHGIAQPGVLLIF) traverse the membrane as a helical segment. Over 84–147 (GTMTDVFIDY…MIRFAGYYAG (64 aa)) the chain is Extracellular. N-linked (GlcNAc...) asparagine glycosylation is found at asparagine 109, asparagine 116, asparagine 122, and asparagine 125. A helical transmembrane segment spans residues 148–168 (IGIAVLTTGYIQICFWGIAAA). Residues 169-215 (HQIQKMRKSYFRKIMRMGIGWVDCNSVGKLNTPFSVDFNKINDSSAD) lie on the Cytoplasmic side of the membrane. A helical transmembrane segment spans residues 216–236 (QLAIFIQGMTSPIFGFLVGFS). Over 237–240 (QWWK) the chain is Extracellular. A helical transmembrane segment spans residues 241–261 (LTLVIISVSPLIGLGAAIIGL). Topologically, residues 262–319 (SVSKFTDYELKAYAKAGSVADEVISSMRTVAAFGGEKKEVERYEKNLVFAQRWGIRKG) are cytoplasmic. The helical transmembrane segment at 320-340 (IVMGFFTGYMWCLIFFCYALA) threads the bilayer. Residues 341-353 (FWYGSKLVLEEGE) are Extracellular-facing. The helical transmembrane segment at 354-374 (YSPGALVQIFLSVIIGALNLG) threads the bilayer. Topologically, residues 375–755 (NASPCLEAFA…KLNAPEWPYM (381 aa)) are cytoplasmic. One can recognise an ABC transporter 1 domain in the interval 420–656 (IEFHNVTFHY…KGVYFALVTL (237 aa)). Residue 455–462 (GPSGAGKS) coordinates ATP. Threonine 586 carries the phosphothreonine modification. Residue serine 587 is modified to Phosphoserine. The tract at residues 651 to 672 (FALVTLQSQRNQGDQEENEKDA) is interaction with HAX1. Residues 659–735 (QRNQGDQEEN…KDKDLPAQED (77 aa)) are disordered. The span at 664 to 677 (DQEENEKDATEDDI) shows a compositional bias: acidic residues. Serine 690, serine 701, and serine 704 each carry phosphoserine. Residues 714 to 731 (VEDHKSTHEEDRKDKDLP) show a composition bias toward basic and acidic residues. The ABC transmembrane type-1 2 domain maps to 755–1043 (MLLGSMGAAV…ASSYTPSYAK (289 aa)). A helical transmembrane segment spans residues 756-776 (LLGSMGAAVNGAVTPLYAFLF). The Extracellular portion of the chain corresponds to 777–794 (SQILGTFSLPDKEEQRSQ). Residues 795 to 815 (INGICLLFVTLGCVSFFTQFL) traverse the membrane as a helical segment. Over 816–869 (QGYTFAKSGELLTKRLRKFGFRAMLGQDIGWFDDLRNSPGALTTRLATDASQVQ) the chain is Cytoplasmic. 2 helical membrane-spanning segments follow: residues 870–890 (GATGSQIGMMVNSFTNVTVAM) and 891–911 (IIAFLFSWKLTLGIVCFFPFL). The Cytoplasmic portion of the chain corresponds to 912-979 (ALSGALQTKM…PYKMAIKKAN (68 aa)). Residues 980–1000 (VYGLCFGFSQCITFIANSASY) form a helical membrane-spanning segment. At 1001–1011 (RYGGYLISNEG) the chain is on the extracellular side. Residues 1012-1032 (LHFSYVFRVISAVVLSATALG) form a helical membrane-spanning segment. Over 1033-1321 (RASSYTPSYA…KLVTTGSPIS (289 aa)) the chain is Cytoplasmic. The ABC transporter 2 domain maps to 1078–1316 (IDFVDCKFTY…KGAYYKLVTT (239 aa)). ATP is bound at residue 1113-1120 (GSSGCGKS). A phosphoserine mark is found at serine 1214 and serine 1321.

This sequence belongs to the ABC transporter superfamily. ABCB family. Multidrug resistance exporter (TC 3.A.1.201) subfamily. Interacts with HAX1. Interacts with the adapter protein complex 2 (AP-2) throught AP2A2 or AP2A1; this interaction regulates cell membrane expression of ABCB11 through its internalization in a clathrin-dependent manner and its subsequent degradation. Post-translationally, N-glycosylated. In terms of processing, ubiquitinated; short-chain ubiquitination regulates cell-Surface expression of ABCB11. As to expression, expressed predominantly, if not exclusively in the liver, where it was further localized to the canalicular microvilli and to subcanalicular vesicles of the hepatocytes by in situ.

It localises to the apical cell membrane. The protein resides in the recycling endosome membrane. The protein localises to the endosome. Its subcellular location is the cell membrane. It catalyses the reaction cholate(in) + ATP + H2O = cholate(out) + ADP + phosphate + H(+). It carries out the reaction taurocholate(in) + ATP + H2O = taurocholate(out) + ADP + phosphate + H(+). The enzyme catalyses glycocholate(in) + ATP + H2O = glycocholate(out) + ADP + phosphate + H(+). The catalysed reaction is glycochenodeoxycholate(in) + ATP + H2O = glycochenodeoxycholate(out) + ADP + phosphate + H(+). It catalyses the reaction taurochenodeoxycholate(in) + ATP + H2O = taurochenodeoxycholate(out) + ADP + phosphate + H(+). It carries out the reaction glycoursodeoxycholate(in) + ATP + H2O = glycoursodeoxycholate(out) + ADP + phosphate + H(+). The enzyme catalyses tauroursodeoxycholate(in) + ATP + H2O = tauroursodeoxycholate(out) + ADP + phosphate + H(+). The catalysed reaction is taurodeoxycholate(in) + ATP + H2O = taurodeoxycholate(out) + ADP + phosphate + H(+). It catalyses the reaction taurolithocholate 3-sulfate(in) + ATP + H2O = taurolithocholate 3-sulfate(out) + ADP + phosphate + H(+). It carries out the reaction pravastatin(in) + ATP + H2O = pravastatin(out) + ADP + phosphate + H(+). The uptake of taurocholate is inhibited by taurolithocholate sulfate with an IC(50) of 9 uM. Pravastatin competitively inhibits the transport of taurocholic acid. Cyclosporin A, glibenclamide, rifampicin and troglitazonestrongly competitively inhibit the transport activity of taurocholate. The canalicular transport activity of taurocholate is strongly dependent on canalicular membrane cholesterol content. The uptake of taurocholate is increased by short- and medium-chain fatty acids. Cholesterol increases transport capacity of taurocholate without affecting the affinity for the substrate. Catalyzes the transport of the major hydrophobic bile salts, such as taurine and glycine-conjugated cholic acid across the canalicular membrane of hepatocytes in an ATP-dependent manner, therefore participates in hepatic bile acid homeostasis and consequently to lipid homeostasis through regulation of biliary lipid secretion in a bile salts dependent manner. Transports taurine-conjugated bile salts more rapidly than glycine-conjugated bile salts. Also transports non-bile acid compounds, such as pravastatin and fexofenadine in an ATP-dependent manner and may be involved in their biliary excretion. In Oryctolagus cuniculus (Rabbit), this protein is Bile salt export pump.